Reading from the N-terminus, the 136-residue chain is Histone H3 (136 aa).

The segment at 1–43 (MARTKQTARKSTGGKAPRKQLASKAARKSAPSTGGVKKPHRYK) is disordered. Residue K5 is modified to N6,N6,N6-trimethyllysine; alternate. Residue K5 is modified to N6,N6-dimethyllysine; alternate. K5 and K10 each carry N6-methyllysine; alternate. K10 carries the post-translational modification N6-acetyllysine; alternate. S11 bears the Phosphoserine mark. The residue at position 15 (K15) is an N6,N6-dimethyllysine; alternate. Residues K15, K19, K24, K28, and K37 each carry the N6-acetyllysine; alternate modification. Residues K19, K24, K28, and K37 each carry the N6-methyllysine; alternate modification. Residues K28 and K37 each carry the N6,N6,N6-trimethyllysine; alternate modification. An N6,N6-dimethyllysine; alternate mark is found at K28 and K37. An N6-acetyllysine mark is found at K57 and K65. The residue at position 80 (K80) is an N6,N6,N6-trimethyllysine; alternate. K80 carries the post-translational modification N6,N6-dimethyllysine; alternate. K80 carries the N6-methyllysine; alternate modification.

Belongs to the histone H3 family. In terms of assembly, the nucleosome is a histone octamer containing two molecules each of H2A, H2B, H3 and H4 assembled in one H3-H4 heterotetramer and two H2A-H2B heterodimers. The octamer wraps approximately 147 bp of DNA. In terms of processing, phosphorylated to form H3S10ph. H3S10ph promotes subsequent H3K14ac formation and is required for transcriptional activation through TBP recruitment to the promoters. Post-translationally, mono-, di- and trimethylated by the COMPASS complex to form H3K4me1/2/3. H3K4me activates gene expression by regulating transcription elongation and plays a role in telomere length maintenance. H3K4me enrichment correlates with transcription levels, and occurs in a 5' to 3' gradient with H3K4me3 enrichment at the 5'-end of genes, shifting to H3K4me2 and then H3K4me1. Methylated by SET2 to form H3K36me. H3K36me represses gene expression. Methylated by DOT1 to form H3K79me. H3K79me is required for association of SIR proteins with telomeric regions and for telomeric silencing. The COMPASS-mediated formation of H3K4me2/3 and the DOT1-mediated formation of H3K79me require H2BK123ub1. Acetylation of histone H3 leads to transcriptional activation. H3K14ac formation by GCN5 is promoted by H3S10ph. H3K14ac can also be formed by ESA1. H3K56ac formation occurs predominantly in newly synthesized H3 molecules during G1, S and G2/M of the cell cycle and may be involved in DNA repair.

It is found in the nucleus. Its subcellular location is the chromosome. In terms of biological role, core component of nucleosome. Nucleosomes wrap and compact DNA into chromatin, limiting DNA accessibility to the cellular machineries which require DNA as a template. Histones thereby play a central role in transcription regulation, DNA repair, DNA replication and chromosomal stability. DNA accessibility is regulated via a complex set of post-translational modifications of histones, also called histone code, and nucleosome remodeling. The sequence is that of Histone H3 (HHT1) from Phaeosphaeria nodorum (strain SN15 / ATCC MYA-4574 / FGSC 10173) (Glume blotch fungus).